The sequence spans 202 residues: Transcription factor MUTE (202 aa).

The 49-residue stretch at 1–49 (MSHIAVERNRRRQMNEHLKSLRSLTPCFYIKRGDQASIIGGVIEFIKEL) folds into the bHLH domain.

As to quaternary structure, homodimer. In terms of tissue distribution, leaf epidermis and flowers.

It is found in the nucleus. In terms of biological role, transcription factor. Together with FMA and SPCH, regulates the stomata formation. Required for the differentiation of stomatal guard cells, by promoting successive asymmetric cell divisions and the formation of guard mother cells. Promotes the conversion of the leaf epidermis into stomata. This chain is Transcription factor MUTE (MUTE), found in Arabidopsis thaliana (Mouse-ear cress).